Here is a 321-residue protein sequence, read N- to C-terminus: tRNA(Ile)-lysidine synthase (321 aa).

Position 30 to 35 (serine 30 to serine 35) interacts with ATP.

This sequence belongs to the tRNA(Ile)-lysidine synthase family.

It is found in the cytoplasm. The catalysed reaction is cytidine(34) in tRNA(Ile2) + L-lysine + ATP = lysidine(34) in tRNA(Ile2) + AMP + diphosphate + H(+). In terms of biological role, ligates lysine onto the cytidine present at position 34 of the AUA codon-specific tRNA(Ile) that contains the anticodon CAU, in an ATP-dependent manner. Cytidine is converted to lysidine, thus changing the amino acid specificity of the tRNA from methionine to isoleucine. The chain is tRNA(Ile)-lysidine synthase from Chlamydia trachomatis serovar L2 (strain ATCC VR-902B / DSM 19102 / 434/Bu).